The primary structure comprises 434 residues: Pectate lyase (434 aa).

A signal peptide spans 1-22 (MKAAQFFLYSLLFFASAALSSA). N-linked (GlcNAc...) asparagine glycosylation is found at Asn-68 and Asn-97. Residues Asp-232, Asp-256, and Asp-260 each contribute to the Ca(2+) site. Arg-312 is a catalytic residue.

This sequence belongs to the polysaccharide lyase 1 family. Ca(2+) is required as a cofactor.

The enzyme catalyses Eliminative cleavage of (1-&gt;4)-alpha-D-galacturonan to give oligosaccharides with 4-deoxy-alpha-D-galact-4-enuronosyl groups at their non-reducing ends.. The protein operates within glycan metabolism; pectin degradation; 2-dehydro-3-deoxy-D-gluconate from pectin: step 2/5. The protein is Pectate lyase of Lilium longiflorum (Trumpet lily).